The sequence spans 309 residues: Olfactory receptor 10J5 (309 aa).

Residues 1–25 lie on the Extracellular side of the membrane; it reads MKRKNFTEVSEFIFLGFSSFGKHQI. Asn5 carries N-linked (GlcNAc...) asparagine glycosylation. Residues 26–46 traverse the membrane as a helical segment; the sequence is TLFVVFLTVYILTLVANIIIV. Over 47 to 54 the chain is Cytoplasmic; that stretch reads TIICIDHH. The chain crosses the membrane as a helical span at residues 55-75; that stretch reads LHTPMYFFLSMLASSETVYTL. Residues 76–99 are Extracellular-facing; the sequence is VIVPRMLLSLIFHNQPISLAGCAT. Residues Cys97 and Cys188 are joined by a disulfide bond. A helical membrane pass occupies residues 100 to 120; that stretch reads QMFFFVILATNNCFLLTAMGY. The Cytoplasmic segment spans residues 121–139; that stretch reads DRYVAICRPLRYTVIMSKG. The chain crosses the membrane as a helical span at residues 140 to 160; it reads LCAQLVCGSFGIGLTMAVLHV. Residues 161–196 lie on the Extracellular side of the membrane; sequence TAMFNLPFCGTVVDHFFCDIYPVMKLSCIDTTINEI. The helical transmembrane segment at 197 to 216 threads the bilayer; sequence INYGVSSFVIFVPIGLIFIS. At 217-236 the chain is on the cytoplasmic side; it reads YVLVISSILQIASAEGRKKT. The helical transmembrane segment at 237–257 threads the bilayer; it reads FATCVSHLTVVIVHCGCASIA. Residues 258–270 are Extracellular-facing; that stretch reads YLKPKSESSIEKD. A helical transmembrane segment spans residues 271–291; that stretch reads LVLSVTYTIITPLLNPVVYSL. Topologically, residues 292–309 are cytoplasmic; that stretch reads RNKEVKDALCRVVGRNIS.

Belongs to the G-protein coupled receptor 1 family. As to expression, expressed in both the aorta, the coronary artery and umbilical vein endothelial cells (HUVECs) (at protein level).

It localises to the cell membrane. Olfactory receptor. Activated by the synthetic floral odorant, lyral, and by alpha-cedrene, a sesquiterpene constituent of cedarwood oil. Its activation increases intracellular Ca(2+). Acts as a key regulator of myogenesis through its actions on cell migration and adhesion by activating the Ca(2+)-dependent AKT signal transduction pathway. Also acts as a regulator of angiogenesis. Moreover, plays a role in the regulation of lipid accumulation in hepatocytes via the cAMP-PKA pathway. May be involved in sperm chemotaxis and motility. The polypeptide is Olfactory receptor 10J5 (Homo sapiens (Human)).